The following is a 168-amino-acid chain: Protein-export protein SecB (168 aa).

Residues 1–21 form a disordered region; it reads MADQPSGNNDAKQAETNGNTV.

The protein belongs to the SecB family. As to quaternary structure, homotetramer, a dimer of dimers. One homotetramer interacts with 1 SecA dimer.

It localises to the cytoplasm. In terms of biological role, one of the proteins required for the normal export of preproteins out of the cell cytoplasm. It is a molecular chaperone that binds to a subset of precursor proteins, maintaining them in a translocation-competent state. It also specifically binds to its receptor SecA. The sequence is that of Protein-export protein SecB from Chelativorans sp. (strain BNC1).